The sequence spans 345 residues: Phosphate acyltransferase (345 aa).

It belongs to the PlsX family. In terms of assembly, homodimer. Probably interacts with PlsY.

It is found in the cytoplasm. It carries out the reaction a fatty acyl-[ACP] + phosphate = an acyl phosphate + holo-[ACP]. Its pathway is lipid metabolism; phospholipid metabolism. Catalyzes the reversible formation of acyl-phosphate (acyl-PO(4)) from acyl-[acyl-carrier-protein] (acyl-ACP). This enzyme utilizes acyl-ACP as fatty acyl donor, but not acyl-CoA. The sequence is that of Phosphate acyltransferase from Levilactobacillus brevis (strain ATCC 367 / BCRC 12310 / CIP 105137 / JCM 1170 / LMG 11437 / NCIMB 947 / NCTC 947) (Lactobacillus brevis).